Reading from the N-terminus, the 267-residue chain is Non-homologous end joining protein Ku (267 aa).

Positions 11-195 (AVGQVSCAVA…KVKGEMLELA (185 aa)) constitute a Ku domain. A disordered region spans residues 229 to 267 (GRKPKRKAAPKKAREPSDLMAALRESVAATERPRRRKAG).

This sequence belongs to the prokaryotic Ku family. Homodimer. Interacts with LigD.

Functionally, with LigD forms a non-homologous end joining (NHEJ) DNA repair enzyme, which repairs dsDNA breaks with reduced fidelity. Binds linear dsDNA with 5'- and 3'- overhangs but not closed circular dsDNA nor ssDNA. Recruits and stimulates the ligase activity of LigD. This chain is Non-homologous end joining protein Ku, found in Cereibacter sphaeroides (strain KD131 / KCTC 12085) (Rhodobacter sphaeroides).